Reading from the N-terminus, the 237-residue chain is Uracil-DNA glycosylase (237 aa).

The active-site Proton acceptor is D77.

It belongs to the uracil-DNA glycosylase (UDG) superfamily. UNG family.

It localises to the cytoplasm. The catalysed reaction is Hydrolyzes single-stranded DNA or mismatched double-stranded DNA and polynucleotides, releasing free uracil.. In terms of biological role, excises uracil residues from the DNA which can arise as a result of misincorporation of dUMP residues by DNA polymerase or due to deamination of cytosine. The protein is Uracil-DNA glycosylase of Acinetobacter baylyi (strain ATCC 33305 / BD413 / ADP1).